A 447-amino-acid chain; its full sequence is Argininosuccinate synthase (447 aa).

ATP is bound by residues 17-25 and Ala-43; that span reads AFSGGLDTS. Tyr-99 is a binding site for L-citrulline. The ATP site is built by Gly-129 and Thr-131. The L-aspartate site is built by Thr-131, Asn-135, and Asp-136. L-citrulline is bound at residue Asn-135. Residue Asp-136 participates in ATP binding. 2 residues coordinate L-citrulline: Arg-139 and Ser-192. Asp-194 lines the ATP pocket. 3 residues coordinate L-citrulline: Thr-201, Glu-203, and Glu-280.

It belongs to the argininosuccinate synthase family. Type 2 subfamily. As to quaternary structure, homotetramer.

The protein resides in the cytoplasm. The enzyme catalyses L-citrulline + L-aspartate + ATP = 2-(N(omega)-L-arginino)succinate + AMP + diphosphate + H(+). It functions in the pathway amino-acid biosynthesis; L-arginine biosynthesis; L-arginine from L-ornithine and carbamoyl phosphate: step 2/3. The polypeptide is Argininosuccinate synthase (Salmonella agona (strain SL483)).